Consider the following 140-residue polypeptide: Lysozyme B (140 aa).

An N-terminal signal peptide occupies residues 1–18 (MKAFIVLVALALAAPALG). In terms of domain architecture, C-type lysozyme spans 19–140 (RTMDRCSLAR…GWLPSIDDCF (122 aa)). 4 cysteine pairs are disulfide-bonded: cysteine 24–cysteine 139, cysteine 45–cysteine 129, cysteine 80–cysteine 96, and cysteine 92–cysteine 110. Residues glutamate 50 and aspartate 68 contribute to the active site.

The protein belongs to the glycosyl hydrolase 22 family. As to expression, found in the midgut.

The enzyme catalyses Hydrolysis of (1-&gt;4)-beta-linkages between N-acetylmuramic acid and N-acetyl-D-glucosamine residues in a peptidoglycan and between N-acetyl-D-glucosamine residues in chitodextrins.. In terms of biological role, unlikely to play an active role in the humoral immune defense. May have a function in the digestion of bacteria in the food. The sequence is that of Lysozyme B (LysB) from Drosophila melanogaster (Fruit fly).